The sequence spans 155 residues: MKPGAFALNPHAASYVPISKRVDYGGGDDGLVFAAKSPTVEVSMPKKSSEMAYKQIRDDDLDLEMDIDMDIEYLLVTFSGLSQESITDVYLANGGDLEATIEMLNQLEIYSTESEENLPETLDIGDISESGPSTSKSTEVAASTSSVIPNAPVSA.

The PAM2-like motif lies at 7–17 (ALNPHAASYVP). The region spanning 66-109 (DIDMDIEYLLVTFSGLSQESITDVYLANGGDLEATIEMLNQLEI) is the CUE domain. The disordered stretch occupies residues 114-155 (SEENLPETLDIGDISESGPSTSKSTEVAASTSSVIPNAPVSA). The segment covering 130–148 (SGPSTSKSTEVAASTSSVI) has biased composition (polar residues).

In terms of tissue distribution, specifically expressed in immature siliques.

Its function is as follows. Promotes polyploidy in dark-grown seedlings. Regulates the endocycle leading to hypocotyl elongation. The polypeptide is Polyadenylate-binding protein-interacting protein 5 (CID5) (Arabidopsis thaliana (Mouse-ear cress)).